The sequence spans 89 residues: Small ribosomal subunit protein uS17 (89 aa).

It belongs to the universal ribosomal protein uS17 family. In terms of assembly, part of the 30S ribosomal subunit.

Its function is as follows. One of the primary rRNA binding proteins, it binds specifically to the 5'-end of 16S ribosomal RNA. The protein is Small ribosomal subunit protein uS17 of Xanthomonas campestris pv. campestris (strain B100).